A 510-amino-acid chain; its full sequence is Bone morphogenetic protein 6 (510 aa).

Positions 1–20 (MPGLGRRAQWLCWWWGLLCS) are cleaved as a signal peptide. A propeptide spanning residues 21–371 (CGPPPLRPPL…VSEVHVRTTR (351 aa)) is cleaved from the precursor. Disordered stretches follow at residues 87–129 (PHRP…RLKS) and 143–199 (NDDE…PLTS). Low complexity predominate over residues 106-116 (PQQQQQQQQQQ). Residues N238, N266, N383, N401, and N451 are each glycosylated (N-linked (GlcNAc...) asparagine). The interval 370-402 (TRSASSRRRQQSRNRSTQSQDVSRGSGSSDYNG) is disordered. The span at 390-401 (DVSRGSGSSDYN) shows a compositional bias: polar residues. 3 disulfide bridges follow: C409-C475, C438-C507, and C442-C509.

This sequence belongs to the TGF-beta family. As to quaternary structure, interacts with SOSTDC1. Interacts (when glycosylated) with type I receptor ACVR1; the interaction may induce HAMP expression. Interacts with type II receptor ACVR2B. Interacts with Hemojuvelin/HJV. Interacts with ERFE; the interaction inhibits BMP-induced transcription of HAMP. Interacts with BMPR1A/ALK3. Forms heterodimers with BMP2 in vitro; the heterodimer then binds to its receptor BMPR1A /ALK3 and may induce HAMP expression. In terms of tissue distribution, expressed in the lung. Low levels seen in the kidney.

Its subcellular location is the secreted. Functionally, growth factor of the TGF-beta superfamily that plays essential roles in many developmental processes including cartilage and bone formation. Also plays an important role in the regulation of HAMP/hepcidin expression and iron metabolism by acting as a ligand for hemojuvelin/HJV. Also acts to promote expression of HAMP, potentially via the interaction with its receptor BMPR1A/ALK3. Initiates the canonical BMP signaling cascade by associating with type I receptor ACVR1 and type II receptor ACVR2B. In turn, ACVR1 propagates signal by phosphorylating SMAD1/5/8 that travel to the nucleus and act as activators and repressors of transcription of target. Can also signal through non-canonical pathway such as TAZ-Hippo signaling cascade to modulate VEGF signaling by regulating VEGFR2 expression. This Mus musculus (Mouse) protein is Bone morphogenetic protein 6 (Bmp6).